Reading from the N-terminus, the 153-residue chain is Endoribonuclease YbeY (153 aa).

Residues His-113, His-117, and His-123 each coordinate Zn(2+).

It belongs to the endoribonuclease YbeY family. Zn(2+) serves as cofactor.

Its subcellular location is the cytoplasm. In terms of biological role, single strand-specific metallo-endoribonuclease involved in late-stage 70S ribosome quality control and in maturation of the 3' terminus of the 16S rRNA. In Aliivibrio fischeri (strain ATCC 700601 / ES114) (Vibrio fischeri), this protein is Endoribonuclease YbeY.